A 342-amino-acid polypeptide reads, in one-letter code: Transmembrane protein 115 homolog (342 aa).

At 1 to 21 the chain is on the cytoplasmic side; that stretch reads MQYSSRFLELNIPDSFLNINK. Residues 22–42 traverse the membrane as a helical segment; that stretch reads IPDATKFITVTYICLTATLFC. Topologically, residues 43 to 121 are lumenal; the sequence is IRRSLYNKLV…NWNSSKEMFK (79 aa). Asn-114 is a glycosylation site (N-linked (GlcNAc...) asparagine). The chain crosses the membrane as a helical span at residues 122–142; that stretch reads FIIVLGSLTNVLIIMLTLLVS. At 143-159 the chain is on the cytoplasmic side; the sequence is FFSNKVRLDIPLDGNYT. Residues 160-180 traverse the membrane as a helical segment; that stretch reads ILIGFPIIYRQLLPETTIIHL. Topologically, residues 181–207 are lumenal; that stretch reads KTPQFLAKNFRFKLLPIFVMFTMTVTQ. A helical membrane pass occupies residues 208–228; that stretch reads IIWFHHFAQLFSIWVTFFASW. Residues 229 to 342 lie on the Cytoplasmic side of the membrane; that stretch reads SYLRFFQKLA…QVLEERMVNP (114 aa).

The protein belongs to the TMEM115 family. In terms of assembly, homooligomer.

Its subcellular location is the golgi apparatus membrane. Its function is as follows. May play a role in retrograde transport of proteins from the Golgi to the endoplasmic reticulum. The protein is Transmembrane protein 115 homolog of Saccharomyces cerevisiae (strain ATCC 204508 / S288c) (Baker's yeast).